Consider the following 329-residue polypeptide: NADH-quinone oxidoreductase subunit H (329 aa).

The next 9 membrane-spanning stretches (helical) occupy residues 9-29 (LIKI…ATYI), 42-62 (GPCY…IKLF), 75-95 (FIFT…MAPI), 117-137 (IGFL…ILAG), 154-174 (IQLL…LMVV), 188-208 (GGFL…FLIA), 238-258 (LKWG…SFVI), 269-291 (WGFI…LSMW), and 309-329 (WKIM…IILI).

It belongs to the complex I subunit 1 family. NDH-1 is composed of 14 different subunits. Subunits NuoA, H, J, K, L, M, N constitute the membrane sector of the complex.

It is found in the cell inner membrane. It carries out the reaction a quinone + NADH + 5 H(+)(in) = a quinol + NAD(+) + 4 H(+)(out). In terms of biological role, NDH-1 shuttles electrons from NADH, via FMN and iron-sulfur (Fe-S) centers, to quinones in the respiratory chain. The immediate electron acceptor for the enzyme in this species is believed to be ubiquinone. Couples the redox reaction to proton translocation (for every two electrons transferred, four hydrogen ions are translocated across the cytoplasmic membrane), and thus conserves the redox energy in a proton gradient. This subunit may bind ubiquinone. This chain is NADH-quinone oxidoreductase subunit H, found in Helicobacter pylori (strain HPAG1).